Here is a 715-residue protein sequence, read N- to C-terminus: Methylmalonyl-CoA mutase large subunit (715 aa).

7 residues coordinate (R)-methylmalonyl-CoA: Tyr70, Met73, Arg77, Thr80, Arg82, Tyr84, and Ser109. Residues Phe112 and Ala134 each contribute to the cob(II)alamin site. Positions 190 and 192 each coordinate (R)-methylmalonyl-CoA. The cob(II)alamin site is built by Val201 and Arg202. Residues Arg202, His239, Arg278, and Ser280 each coordinate (R)-methylmalonyl-CoA. Cob(II)alamin contacts are provided by Gly328, Glu365, Ala368, Gly599, His600, Asp601, Arg602, Ser645, Leu647, Gly676, and Thr699. Residues 587-715 (QPRIMIAKMG…AKVLEILLEE (129 aa)) enclose the B12-binding domain.

Belongs to the methylmalonyl-CoA mutase family. As to quaternary structure, heterodimer of an alpha and a beta chain. Adenosylcob(III)alamin serves as cofactor.

The enzyme catalyses (R)-methylmalonyl-CoA = succinyl-CoA. Functionally, catalyzes the isomerization of succinyl-CoA to methylmalonyl-CoA during synthesis of propionate from tricarboxylic acid-cycle intermediates. In Porphyromonas gingivalis (strain ATCC BAA-308 / W83), this protein is Methylmalonyl-CoA mutase large subunit (mutB).